The sequence spans 370 residues: tRNA-specific 2-thiouridylase MnmA (370 aa).

Residues 25 to 32 and Leu-51 contribute to the ATP site; that span reads ALSGGVDS. Residue Cys-112 is the Nucleophile of the active site. Cys-112 and Cys-211 are disulfide-bonded. Gly-137 lines the ATP pocket. Residues 161-163 form an interaction with tRNA region; it reads KDQ. Residue Cys-211 is the Cysteine persulfide intermediate of the active site. Positions 316–317 are interaction with tRNA; sequence RY.

The protein belongs to the MnmA/TRMU family.

Its subcellular location is the cytoplasm. It carries out the reaction S-sulfanyl-L-cysteinyl-[protein] + uridine(34) in tRNA + AH2 + ATP = 2-thiouridine(34) in tRNA + L-cysteinyl-[protein] + A + AMP + diphosphate + H(+). Functionally, catalyzes the 2-thiolation of uridine at the wobble position (U34) of tRNA, leading to the formation of s(2)U34. This chain is tRNA-specific 2-thiouridylase MnmA, found in Synechococcus sp. (strain JA-3-3Ab) (Cyanobacteria bacterium Yellowstone A-Prime).